Consider the following 659-residue polypeptide: Ion-translocating oxidoreductase complex subunit C (659 aa).

2 4Fe-4S ferredoxin-type domains span residues 366 to 397 and 407 to 436; these read TEMG…QQLY and KARN…VQYY. [4Fe-4S] cluster is bound by residues cysteine 377, cysteine 380, cysteine 383, cysteine 387, cysteine 416, cysteine 419, cysteine 422, and cysteine 426.

It belongs to the 4Fe4S bacterial-type ferredoxin family. RnfC subfamily. In terms of assembly, the complex is composed of six subunits: RnfA, RnfB, RnfC, RnfD, RnfE and RnfG. The cofactor is [4Fe-4S] cluster.

It is found in the cell inner membrane. Functionally, part of a membrane-bound complex that couples electron transfer with translocation of ions across the membrane. This chain is Ion-translocating oxidoreductase complex subunit C, found in Yersinia pseudotuberculosis serotype IB (strain PB1/+).